A 420-amino-acid polypeptide reads, in one-letter code: Glutamate dehydrogenase (420 aa).

The active site involves lysine 105. Glycine 220–tyrosine 226 is an NAD(+) binding site.

It belongs to the Glu/Leu/Phe/Val dehydrogenases family. Homohexamer.

The protein localises to the cytoplasm. It carries out the reaction L-glutamate + NAD(+) + H2O = 2-oxoglutarate + NH4(+) + NADH + H(+). The catalysed reaction is L-glutamate + NADP(+) + H2O = 2-oxoglutarate + NH4(+) + NADPH + H(+). The chain is Glutamate dehydrogenase (gdhA) from Pyrococcus horikoshii (strain ATCC 700860 / DSM 12428 / JCM 9974 / NBRC 100139 / OT-3).